A 539-amino-acid chain; its full sequence is Phosphatidylinositol 4-phosphate 5-kinase type-1 beta (539 aa).

Positions 1–21 (MSSTAENGDAVPGKQNEEKTY) are disordered. In terms of domain architecture, PIPK spans 25–395 (ASSAIKGAIQ…RFLKFMNSRV (371 aa)). Phosphoserine occurs at positions 445, 447, and 448.

In terms of assembly, interacts with RAC1, AJUBA, PLD1, PLD2 and ARF1.

It localises to the cytoplasm. It is found in the cytosol. Its subcellular location is the cell membrane. The protein resides in the endomembrane system. The catalysed reaction is a 1,2-diacyl-sn-glycero-3-phospho-(1D-myo-inositol 4-phosphate) + ATP = a 1,2-diacyl-sn-glycero-3-phospho-(1D-myo-inositol-4,5-bisphosphate) + ADP + H(+). It carries out the reaction 1-octadecanoyl-2-(5Z,8Z,11Z,14Z)-eicosatetraenoyl-sn-glycero-3-phospho-1D-myo-inositol 4-phosphate + ATP = 1-octadecanoyl-2-(5Z,8Z,11Z,14Z)-eicosatetraenoyl-sn-glycero-3-phospho-1D-myo-inositol 4,5-bisphosphate + ADP + H(+). The enzyme catalyses 1-octadecanoyl-2-(9Z)-octadecenoyl-sn-glycero-3-phospho-1D-myo-inositol 4-phosphate + ATP = 1-octadecanoyl-2-(9Z)-octadecenoyl-sn-glycero-3-phospho-1D-myo-inositol 4,5-bisphosphate + ADP + H(+). It catalyses the reaction 1-octadecanoyl-2-(9Z)-octadecenoyl-sn-glycero-3-phospho-1D-myo-inositol + ATP = 1-octadecanoyl-2-(9Z)-octadecenoyl-sn-glycero-3-phospho-1D-myo-inositol 5-phosphate + ADP + H(+). The catalysed reaction is 1-octadecanoyl-2-(9Z,12Z)-octadecadienoyl-sn-glycero-3-phospho-1D-myo-inositol + ATP = 1-octadecanoyl-2-(9Z,12Z)-octadecadienoyl-sn-glycero-3-phospho-1D-myo-inositol 5-phosphate + ADP + H(+). It carries out the reaction 1-octadecanoyl-2-(5Z,8Z,11Z,14Z-eicosatetraenoyl)-sn-glycero-3-phospho-(1D-myo-inositol) + ATP = 1-octadecanoyl-2-(5Z,8Z,11Z,14Z)-eicosatetraenoyl-sn-glycero-3-phospho-1D-myo-inositol 5-phosphate + ADP + H(+). The enzyme catalyses 1,2-di-(9Z,12Z)-octadecadienoyl-sn-glycero-3-phospho-1D-myo-inositol + ATP = 1,2-di(9Z,12Z)-octadecadienoyl-sn-glycero-3-phospho-1D-myo-inositol 5-phosphate + ADP + H(+). Catalyzes the phosphorylation of phosphatidylinositol 4-phosphate (PtdIns(4)P/PI4P) to form phosphatidylinositol 4,5-bisphosphate (PtdIns(4,5)P2/PIP2), a lipid second messenger that regulates several cellular processes such as signal transduction, vesicle trafficking, actin cytoskeleton dynamics, cell adhesion, and cell motility. PtdIns(4,5)P2 can directly act as a second messenger or can be utilized as a precursor to generate other second messengers: inositol 1,4,5-trisphosphate (IP3), diacylglycerol (DAG) or phosphatidylinositol-3,4,5-trisphosphate (PtdIns(3,4,5)P3/PIP3). Mediates RAC1-dependent reorganization of actin filaments. Contributes to the activation of phospholipase PLD2. Together with PIP5K1A, is required, after stimulation by G-protein coupled receptors, for the synthesis of IP3 that will induce stable platelet adhesion. This Rattus norvegicus (Rat) protein is Phosphatidylinositol 4-phosphate 5-kinase type-1 beta.